The primary structure comprises 70 residues: Small ribosomal subunit protein bS21A (70 aa).

This sequence belongs to the bacterial ribosomal protein bS21 family.

In Paraburkholderia xenovorans (strain LB400), this protein is Small ribosomal subunit protein bS21A.